The sequence spans 349 residues: L-lactate dehydrogenase (349 aa).

The disordered stretch occupies residues 199 to 219; the sequence is APEGSIIGADGNPTTDASTMF.

The protein belongs to the LDH2/MDH2 oxidoreductase family.

The protein resides in the cytoplasm. The enzyme catalyses (S)-lactate + NAD(+) = pyruvate + NADH + H(+). It functions in the pathway fermentation; pyruvate fermentation to lactate; (S)-lactate from pyruvate: step 1/1. This is L-lactate dehydrogenase (ldh) from Cupriavidus necator (strain ATCC 17699 / DSM 428 / KCTC 22496 / NCIMB 10442 / H16 / Stanier 337) (Ralstonia eutropha).